The primary structure comprises 530 residues: Potassium voltage-gated channel subfamily A member 6 (530 aa).

Positions 1-35 are disordered; sequence MRSEKSLTLAAPGEVRGPEGEQQDAGEFQEAEGGG. At Ser3 the chain carries Phosphoserine. Positions 21 to 30 are enriched in acidic residues; that stretch reads EQQDAGEFQE. The helical transmembrane segment at 172 to 193 threads the bilayer; that stretch reads PARGIAIVSVLVILISIVIFCL. The disordered stretch occupies residues 203–239; it reads GRGGSNEGSGTRMSPASRGSHEEEDEDEDSYAFPGSI. The residue at position 222 (Ser222) is a Phosphoserine; by CK2. A helical membrane pass occupies residues 264–285; sequence FFLVETLCIVWFTFELLVRFSA. The S-palmitoyl cysteine moiety is linked to residue Cys286. The chain crosses the membrane as a helical span at residues 297-317; it reads MNIIDLVAIFPYFITLGTELV. Residues 339–359 form a helical; Voltage-sensor membrane-spanning segment; the sequence is LAILRVIRLVRVFRIFKLSRH. Residues 361 to 374 form an S4-S5 linker region; that stretch reads KGLQILGKTLQASM. Residues 375–396 form a helical membrane-spanning segment; the sequence is RELGLLIFFLFIGVILFSSAVY. The helical intramembrane region spans 411-422; it reads PDAFWWAVVTMT. A Selectivity filter motif is present at residues 423–428; the sequence is TVGYGD. An intramembrane segment occupies 423–430; sequence TVGYGDMY. Residues 438 to 466 traverse the membrane as a helical segment; sequence IVGSLCAIAGVLTIALPVPVIVSNFNYFY. Position 512 is a phosphoserine; by PKA (Ser512). Positions 527-529 match the PDZ-binding motif; it reads LTE. Position 528 is a phosphothreonine; by PKA (Thr528).

This sequence belongs to the potassium channel family. A (Shaker) (TC 1.A.1.2) subfamily. Kv1.6/KCNA6 sub-subfamily. Homotetramer and heterotetramer of potassium channel proteins. Interacts with KCNAB1 and KCNAB2.

The protein resides in the cell membrane. The catalysed reaction is K(+)(in) = K(+)(out). Functionally, voltage-gated potassium channel that mediates transmembrane potassium transport in excitable membranes. Forms tetrameric potassium-selective channels through which potassium ions pass in accordance with their electrochemical gradient. The channel alternates between opened and closed conformations in response to the voltage difference across the membrane. Can form functional homotetrameric channels and heterotetrameric channels that contain variable proportions of KCNA1, KCNA2, KCNA4, KNCA5, KCNA6, and possibly other family members as well; channel properties depend on the type of alpha subunits that are part of the channel. Channel properties are modulated by cytoplasmic beta subunits that regulate the subcellular location of the alpha subunits and promote rapid inactivation. Homotetrameric channels display rapid activation and slow inactivation. The polypeptide is Potassium voltage-gated channel subfamily A member 6 (Kcna6) (Rattus norvegicus (Rat)).